We begin with the raw amino-acid sequence, 1026 residues long: Multidrug resistance protein MdtC (1026 aa).

Transmembrane regions (helical) follow at residues 15 to 35 (ILIAAAITLCGILGFRLLPVA), 333 to 353 (EVEETLVISVALVILVVFLFL), 360 to 380 (LIPAVAVPVSLIGTFAAMYLC), 387 to 407 (LSLMALTIATGFVVDDAIVVL), 431 to 451 (VGFTVISMSLSLVAVFLPLLL), 463 to 483 (FAVTLSVAIGISLVVSLTLTP), 528 to 548 (LVGVVFLGTVALNIWLYIAIP), 853 to 873 (LILIVAAIATVYIVLGILYES), 897 to 917 (LFNAPFSLIALIGIMLLIGIV), 953 to 973 (PIMMTTLAALFGALPLVLSGG), and 984 to 1004 (ITIVGGLVMSQLLTLYTTPVV).

The protein belongs to the resistance-nodulation-cell division (RND) (TC 2.A.6) family. MdtC subfamily. In terms of assembly, part of a tripartite efflux system composed of MdtA, MdtB and MdtC. MdtC forms a heteromultimer with MdtB.

Its subcellular location is the cell inner membrane. The polypeptide is Multidrug resistance protein MdtC (Salmonella schwarzengrund (strain CVM19633)).